A 237-amino-acid chain; its full sequence is 2,3-bisphosphoglycerate-dependent phosphoglycerate mutase (237 aa).

Residues 8-15 (RHGQSQWN), 21-22 (TG), arginine 60, 87-90 (ERHY), lysine 98, 114-115 (RR), and 180-181 (GN) contribute to the substrate site. Histidine 9 (tele-phosphohistidine intermediate) is an active-site residue. The Proton donor/acceptor role is filled by glutamate 87.

Belongs to the phosphoglycerate mutase family. BPG-dependent PGAM subfamily. In terms of assembly, homodimer.

The enzyme catalyses (2R)-2-phosphoglycerate = (2R)-3-phosphoglycerate. Its pathway is carbohydrate degradation; glycolysis; pyruvate from D-glyceraldehyde 3-phosphate: step 3/5. Its function is as follows. Catalyzes the interconversion of 2-phosphoglycerate and 3-phosphoglycerate. This chain is 2,3-bisphosphoglycerate-dependent phosphoglycerate mutase, found in Caulobacter sp. (strain K31).